We begin with the raw amino-acid sequence, 273 residues long: Vacuolar membrane protein YPL162C (273 aa).

Residues 1-13 (MYVSNGKDTCQLL) are Vacuolar-facing. Residues 14–34 (GPVSLFVQTLMGMTAVIVLLV) traverse the membrane as a helical segment. At 35-51 (KRNYEHPRRKMIVWSYD) the chain is on the cytoplasmic side. Residues 52–72 (IGKQIIGSLGIHFLNLGISIL) traverse the membrane as a helical segment. Residues 73-97 (KKRRRSLFAITAKGNDDEDQCDWYF) lie on the Vacuolar side of the membrane. Residues 98–118 (LNLLLDTTVGIPILWLCLYII) traverse the membrane as a helical segment. The Cytoplasmic segment spans residues 119 to 156 (EKVLKSLHFQNIESGNYFPSKTVGSHPRKPLFSAFVKQ). A helical transmembrane segment spans residues 157 to 177 (LLIFIVGLGVMKFCVFLILNY). At 178 to 198 (LEDLAYWFADLILGWSDSWPN) the chain is on the vacuolar side. Residues 199 to 219 (FQVFLVMFVFPILLNCFQYFC) traverse the membrane as a helical segment. The Cytoplasmic segment spans residues 220 to 273 (VDNVIRLHSESLTITNAENFETNTFLNDEIPDLSEVSNEVPNKDNNISSYGSII).

It localises to the vacuole membrane. The sequence is that of Vacuolar membrane protein YPL162C from Saccharomyces cerevisiae (strain ATCC 204508 / S288c) (Baker's yeast).